The primary structure comprises 217 residues: AFG2-interacting ribosome maturation factor (217 aa).

As to quaternary structure, part of the 55LCC heterohexameric ATPase complex composed at least of AIRIM, AFG2A, AFG2B and CINP. Does not associate with pre-60S ribosomal particles. Phosphorylated on serines by CK2 kinase.

It is found in the nucleus. The protein resides in the cytoplasm. Part of the 55LCC heterohexameric ATPase complex which is chromatin-associated and promotes replisome proteostasis to maintain replication fork progression and genome stability. Required for replication fork progression, sister chromatid cohesion, and chromosome stability. The ATPase activity is specifically enhanced by replication fork DNA and is coupled to cysteine protease-dependent cleavage of replisome substrates in response to replication fork damage. Uses ATPase activity to process replisome substrates in S-phase, facilitating their proteolytic turnover from chromatin to ensure DNA replication and mitotic fidelity. Involved in the cytoplasmic maturation steps of pre-60S ribosomal particles by promoting the release of shuttling protein RSL24D1/RLP24 from the pre-ribosomal particles. The chain is AFG2-interacting ribosome maturation factor (Airim) from Mus musculus (Mouse).